The chain runs to 32 residues: Delta-actitoxin-Eqd1a (32 aa).

It belongs to the sea anemone short toxin (type III) family. Contains 4 disulfide bonds.

Its subcellular location is the secreted. The protein localises to the nematocyst. In terms of biological role, binds specifically to sodium channels (Nav) of the axonal membrane of crayfish and prolongs the falling phase of the action potential. It also increases the maximum rates of rise of both action potential and resting potential. Is only active on crustaceans. This Entacmaea quadricolor (Bubble-tip anemone) protein is Delta-actitoxin-Eqd1a.